Here is a 90-residue protein sequence, read N- to C-terminus: Guanine nucleotide-binding protein subunit gamma (90 aa).

A lipid anchor (S-palmitoyl cysteine) is attached at cysteine 86. The residue at position 87 (cysteine 87) is a Cysteine methyl ester. Cysteine 87 carries the S-farnesyl cysteine lipid modification. A propeptide spans 88–90 (TIM) (removed in mature form).

Belongs to the G protein gamma family. G proteins are composed of 3 units, alpha, beta and gamma.

It is found in the membrane. This chain is Guanine nucleotide-binding protein subunit gamma, found in Kluyveromyces lactis (strain ATCC 8585 / CBS 2359 / DSM 70799 / NBRC 1267 / NRRL Y-1140 / WM37) (Yeast).